A 328-amino-acid chain; its full sequence is Glycerol-3-phosphate dehydrogenase [NAD(P)+] (328 aa).

Residues tryptophan 15, arginine 35, arginine 36, and lysine 105 each contribute to the NADPH site. Positions 105 and 131 each coordinate sn-glycerol 3-phosphate. NADPH is bound at residue alanine 135. Positions 186, 239, 249, 250, and 251 each coordinate sn-glycerol 3-phosphate. The active-site Proton acceptor is lysine 186. Arginine 250 contributes to the NADPH binding site. Residues valine 270 and glutamate 272 each contribute to the NADPH site.

Belongs to the NAD-dependent glycerol-3-phosphate dehydrogenase family.

It is found in the cytoplasm. It carries out the reaction sn-glycerol 3-phosphate + NAD(+) = dihydroxyacetone phosphate + NADH + H(+). It catalyses the reaction sn-glycerol 3-phosphate + NADP(+) = dihydroxyacetone phosphate + NADPH + H(+). Its pathway is membrane lipid metabolism; glycerophospholipid metabolism. Functionally, catalyzes the reduction of the glycolytic intermediate dihydroxyacetone phosphate (DHAP) to sn-glycerol 3-phosphate (G3P), the key precursor for phospholipid synthesis. This Deinococcus radiodurans (strain ATCC 13939 / DSM 20539 / JCM 16871 / CCUG 27074 / LMG 4051 / NBRC 15346 / NCIMB 9279 / VKM B-1422 / R1) protein is Glycerol-3-phosphate dehydrogenase [NAD(P)+].